A 260-amino-acid polypeptide reads, in one-letter code: MISSLWIAKTGLDAQQTNMDVIANNLANVSTNGFKRQRAVFEDLLYQTIRQPGAQSSEQTTLPSGLQIGTGVRPVATERLHSQGNLSQTNNSKDVAIKGQGFFQVMLPDGTSAYTRDGSFQVDQNGQLVTAGGFQVQPAITIPANALSITIGRDGVVSVTQQGQAAPVQVGQLNLTTFMNDTGLESIGENLYIETQSSGAPNESTPGLNGAGLLYQGYVETSNVNVAEELVNMIQVQRAYEINSKAVSTTDQMLQKLTQL.

This sequence belongs to the flagella basal body rod proteins family. In terms of assembly, the basal body constitutes a major portion of the flagellar organelle and consists of four rings (L,P,S, and M) mounted on a central rod. The rod consists of about 26 subunits of FlgG in the distal portion, and FlgB, FlgC and FlgF are thought to build up the proximal portion of the rod with about 6 subunits each.

It is found in the bacterial flagellum basal body. The polypeptide is Flagellar basal-body rod protein FlgG (flgG) (Salmonella typhi).